The primary structure comprises 142 residues: Transcriptional regulator MraZ (142 aa).

SpoVT-AbrB domains are found at residues A5–E51 and A77–S120.

The protein belongs to the MraZ family. Forms oligomers.

The protein localises to the cytoplasm. Its subcellular location is the nucleoid. The sequence is that of Transcriptional regulator MraZ from Verminephrobacter eiseniae (strain EF01-2).